A 583-amino-acid polypeptide reads, in one-letter code: R-linalool synthase QH5, chloroplastic (583 aa).

The N-terminal 40 residues, 1-40 (MASISLFPYSILKQTSPLARGTAYNRIYSTKTTGITVDVA), are a transit peptide targeting the chloroplast. Residues arginine 298, aspartate 335, aspartate 339, arginine 476, and aspartate 479 each coordinate (2E)-geranyl diphosphate. Residues aspartate 335 and aspartate 339 each contribute to the Mg(2+) site. The DDXXD motif motif lies at 335 to 339 (DDVYD). Residues aspartate 479, threonine 483, and glutamate 487 each coordinate Mg(2+). Aspartate 492 lines the K(+) pocket.

The protein belongs to the terpene synthase family. Tpsb subfamily. Mg(2+) is required as a cofactor. It depends on Mn(2+) as a cofactor. The cofactor is K(+). Expressed in every aerial organ except for the stem stele of mature plants. Not detected in roots.

The protein resides in the plastid. Its subcellular location is the chloroplast. It carries out the reaction (2E)-geranyl diphosphate + H2O = (R)-linalool + diphosphate. The protein operates within secondary metabolite biosynthesis; terpenoid biosynthesis. Functionally, monoterpene synthase that catalyzes the formation of (3R)-linalool from geranyl diphosphate, but not from isopentenyl diphosphate, dimethylallyl diphosphate, chrysanthemyl diphosphate, farnesyl diphosphate, (+)-copalyl diphosphate or geranylgeranyl diphosphate. This is R-linalool synthase QH5, chloroplastic from Artemisia annua (Sweet wormwood).